Consider the following 598-residue polypeptide: Aspartate--tRNA ligase (598 aa).

An L-aspartate-binding site is contributed by glutamate 173. Residues 197–200 (QLFK) form an aspartate region. Arginine 219 is a binding site for L-aspartate. ATP-binding positions include 219 to 221 (RDE) and glutamine 228. Histidine 449 lines the L-aspartate pocket. Glutamate 483 is a binding site for ATP. Arginine 490 serves as a coordination point for L-aspartate. ATP is bound at residue 535-538 (GLDR).

It belongs to the class-II aminoacyl-tRNA synthetase family. Type 1 subfamily. In terms of assembly, homodimer.

It localises to the cytoplasm. The catalysed reaction is tRNA(Asp) + L-aspartate + ATP = L-aspartyl-tRNA(Asp) + AMP + diphosphate. Functionally, catalyzes the attachment of L-aspartate to tRNA(Asp) in a two-step reaction: L-aspartate is first activated by ATP to form Asp-AMP and then transferred to the acceptor end of tRNA(Asp). This chain is Aspartate--tRNA ligase, found in Shewanella halifaxensis (strain HAW-EB4).